The following is a 255-amino-acid chain: uncharacterized protein (255 aa).

Disordered stretches follow at residues 112–145 and 157–183; these read CWPG…PSPG and GLAE…PDAQ.

This is an uncharacterized protein from Rhodospirillum rubrum.